We begin with the raw amino-acid sequence, 1079 residues long: Translation initiation factor IF-2 (1079 aa).

Composition is skewed to basic and acidic residues over residues 52 to 65, 75 to 90, and 102 to 134; these read VQAQRDGGARKEGN, RDGDRASARAEAKAPE, and APERAEEADKPAVAKPAKAPETEAHARARKEPQ. The disordered stretch occupies residues 52 to 488; that stretch reads VQAQRDGGAR…RGKKDVRPAA (437 aa). Positions 150-184 are enriched in low complexity; it reads APVAKVVEAAPAETPAPEAPAVKATVTAEAAPAKT. Residues 185-194 show a composition bias toward basic and acidic residues; that stretch reads VEPESERPQA. Positions 276–291 are enriched in low complexity; it reads AAVAQQQMQQQAAQQQ. The span at 306–327 shows a compositional bias: basic and acidic residues; that stretch reads GGYRPEGQREGGYRPEGQREGG. 2 stretches are compositionally biased toward low complexity: residues 348–370 and 380–398; these read EGGYRPGAPRPEGGYRPAGGPRP and PGAPRPEGGYRPAGGAPRP. The span at 419 to 429 shows a compositional bias: gly residues; sequence PRPGGFGGAPG. The span at 461-471 shows a compositional bias: basic and acidic residues; that stretch reads PRGRSDDDVMR. Basic residues predominate over residues 473–482; that stretch reads PRGRGKRGKK. Residues 578–745 enclose the tr-type G domain; the sequence is TRPPVVTIMG…LIAIQAEILE (168 aa). Residues 587–594 form a G1 region; sequence GHVDHGKT. Residue 587–594 coordinates GTP; it reads GHVDHGKT. Residues 612–616 are G2; the sequence is GITQH. Residues 633 to 636 form a G3 region; that stretch reads DTPG. Residues 633 to 637 and 687 to 690 each bind GTP; these read DTPGH and NKMD. Positions 687 to 690 are G4; sequence NKMD. The interval 723-725 is G5; it reads SAK.

Belongs to the TRAFAC class translation factor GTPase superfamily. Classic translation factor GTPase family. IF-2 subfamily.

It is found in the cytoplasm. Its function is as follows. One of the essential components for the initiation of protein synthesis. Protects formylmethionyl-tRNA from spontaneous hydrolysis and promotes its binding to the 30S ribosomal subunits. Also involved in the hydrolysis of GTP during the formation of the 70S ribosomal complex. The polypeptide is Translation initiation factor IF-2 (Nitratidesulfovibrio vulgaris (strain ATCC 29579 / DSM 644 / CCUG 34227 / NCIMB 8303 / VKM B-1760 / Hildenborough) (Desulfovibrio vulgaris)).